The sequence spans 340 residues: DNA primase large subunit PriL (340 aa).

C229, C301, C310, and C318 together coordinate [4Fe-4S] cluster.

The protein belongs to the eukaryotic-type primase large subunit family. As to quaternary structure, heterodimer of a small subunit (PriS) and a large subunit (PriL). [4Fe-4S] cluster is required as a cofactor.

Its function is as follows. Regulatory subunit of DNA primase, an RNA polymerase that catalyzes the synthesis of short RNA molecules used as primers for DNA polymerase during DNA replication. Stabilizes and modulates the activity of the small subunit, increasing the rate of DNA synthesis, and conferring RNA synthesis capability. The DNA polymerase activity may enable DNA primase to also catalyze primer extension after primer synthesis. May also play a role in DNA repair. The protein is DNA primase large subunit PriL of Thermoplasma acidophilum (strain ATCC 25905 / DSM 1728 / JCM 9062 / NBRC 15155 / AMRC-C165).